Consider the following 459-residue polypeptide: Glycerol-3-phosphate acyltransferase, chloroplastic (459 aa).

The N-terminal 90 residues, 1 to 90, are a transit peptide targeting the chloroplast; it reads MTLTFSSSAA…FNEAAGETPS (90 aa). An HXXXXD motif motif is present at residues 229–234; sequence HQSEAD.

Belongs to the GPAT/DAPAT family.

Its subcellular location is the plastid. It localises to the chloroplast stroma. The enzyme catalyses sn-glycerol 3-phosphate + an acyl-CoA = a 1-acyl-sn-glycero-3-phosphate + CoA. The protein operates within phospholipid metabolism; CDP-diacylglycerol biosynthesis; CDP-diacylglycerol from sn-glycerol 3-phosphate: step 1/3. Esterifies acyl-group from acyl-ACP to the sn-1 position of glycerol-3-phosphate. The enzyme from chilling-resistant plants discriminates against non-fluid palmitic acid and selects oleic acid whereas the enzyme from sensitive plants accepts both fatty acids. This is an oleate-selective acyltransferase. The sequence is that of Glycerol-3-phosphate acyltransferase, chloroplastic (ATS1) from Arabidopsis thaliana (Mouse-ear cress).